Here is a 436-residue protein sequence, read N- to C-terminus: Gamma-glutamyl phosphate reductase (436 aa).

The protein belongs to the gamma-glutamyl phosphate reductase family.

The protein localises to the cytoplasm. The catalysed reaction is L-glutamate 5-semialdehyde + phosphate + NADP(+) = L-glutamyl 5-phosphate + NADPH + H(+). It functions in the pathway amino-acid biosynthesis; L-proline biosynthesis; L-glutamate 5-semialdehyde from L-glutamate: step 2/2. Catalyzes the NADPH-dependent reduction of L-glutamate 5-phosphate into L-glutamate 5-semialdehyde and phosphate. The product spontaneously undergoes cyclization to form 1-pyrroline-5-carboxylate. The chain is Gamma-glutamyl phosphate reductase from Prochlorococcus marinus (strain AS9601).